The sequence spans 698 residues: Sucrose non-fermenting protein kinase 1 (698 aa).

Residues 1 to 48 form a disordered region; that stretch reads MAPRGFEDEELTISLSSSHVRRPQQQQPPPPTQQQHAHQPGSRPADAP. The Protein kinase domain occupies 62-313; that stretch reads YKVLRTLGEG…IEDIRADPWF (252 aa). Residues 68–76 and K91 contribute to the ATP site; that span reads LGEGSFGKV. Catalysis depends on D184, which acts as the Proton acceptor. Positions 320 to 417 are auto-inhibitory domain (AID); sequence YLQLPVEEFF…ALLEPEGSSP (98 aa). In terms of domain architecture, UBA spans 360-397; that stretch reads VTEKISKTMGYGKNDVEEALQASEPSAIKDAYMIVREN. Disordered regions lie at residues 410–435, 482–525, and 564–597; these read LEPE…TTTA, TRTD…KKTK, and ESRH…IDPM. The segment covering 415–435 has biased composition (low complexity); the sequence is SSPMLSMSSARSATSTTTTTA. Basic and acidic residues-rich tracts occupy residues 484–493 and 564–573; these read TDAEKEETSR and ESRHAEERAE.

It belongs to the protein kinase superfamily. CAMK Ser/Thr protein kinase family. SNF1 subfamily. Component of the AMP-activated protein kinase complex also known as the SNF1 kinase complex (Snf1c), a heterotrimeric complex composed of a catalytic subunit alpha and 2 regulatory subunits beta and gamma.

The protein resides in the cytoplasm. It localises to the nucleus. The catalysed reaction is L-seryl-[protein] + ATP = O-phospho-L-seryl-[protein] + ADP + H(+). It carries out the reaction L-threonyl-[protein] + ATP = O-phospho-L-threonyl-[protein] + ADP + H(+). Catalytic subunit of the AMP-activated protein kinase complex also known as the SNF1 kinase complex (Snf1c), a central regulator of cellular energy homeostasis, which, in response to a fall in intracellular ATP levels, activates energy-producing pathways and inhibits energy-consuming processes. The complex phosphorylates histone H3 to form H3S10ph, which promotes H3K14ac formation, leading to transcriptional activation through TBP recruitment to the promoters. Activates the expression of the galactose oxidase (GOA) gene and of several cell wall-degrading enzymes (CWDEs) such as pectate lyase, xylanase and glucanase. Plays an important role in sudden death syndrome (SDS) by controlling the colonization of the infected roots. This chain is Sucrose non-fermenting protein kinase 1, found in Fusarium virguliforme.